The sequence spans 4454 residues: E3 ubiquitin-protein ligase HUWE1 (4454 aa).

The segment at 521 to 575 (RASSSNSSTSISGPGPGPGPGPGPGPGPGPGPGPGPGLGPSLGPGPGPGPRPGVQ) is disordered. Low complexity predominate over residues 523–533 (SSSNSSTSISG). Pro residues predominate over residues 535–571 (GPGPGPGPGPGPGPGPGPGPGPGLGPSLGPGPGPGPR). Phosphoserine occurs at positions 724 and 725. 3 disordered regions span residues 781-834 (QKAD…VVGT), 1054-1077 (DEKA…AGSM), and 1094-1114 (TLAP…KSKI). A compositionally biased stretch (acidic residues) spans 801 to 811 (ASSEDEEEEEV). Residues 813-832 (AMQSFNSAQQNETEPNQQVV) show a composition bias toward polar residues. At Ser-816 the chain carries Phosphoserine. Ser-1160 is subject to Phosphoserine. Residues 1367–1378 (LSKEKEGSRGEE) are compositionally biased toward basic and acidic residues. A disordered region spans residues 1367-1396 (LSKEKEGSRGEEEAGQEEGGSRREPQVNQQ). One can recognise a UBA domain in the interval 1392–1431 (QVNQQQLQQLMDMGFTREHAMEALLNTSTMEQATEYLLTH). A phosphoserine mark is found at Ser-1444, Ser-1446, Ser-1458, and Ser-1471. Residues 1446–1465 (SEEDQMMRAIAMSLGQDIPM) enclose the UIM domain. The segment at 1472-1491 (PEEVACRKEEEERKAREKQE) is disordered. Positions 1679-1756 (RAQMTKYLQS…ETGNRRPVML (78 aa)) constitute a WWE domain. The disordered stretch occupies residues 1766-1802 (KNSKSSNGQELEKTLEESKETDIKRKENKGNDIPLAL). Over residues 1775 to 1795 (ELEKTLEESKETDIKRKENKG) the composition is skewed to basic and acidic residues. Ser-1983 bears the Phosphoserine mark. 3 disordered regions span residues 2095-2142 (APAE…SKPL), 2339-2420 (SLFG…QEMQ), and 2433-2556 (LERD…ASPL). The span at 2097–2112 (AETSTTGTSQGEGAST) shows a compositional bias: low complexity. Thr-2112 carries the phosphothreonine modification. A compositionally biased stretch (basic and acidic residues) spans 2114 to 2134 (EETREGKKDKEGDRTSEEGKQ). The span at 2339 to 2368 (SLFGSKSASSKSKSEQDAQGASQDSSSHQQ) shows a compositional bias: low complexity. Ser-2343 carries the post-translational modification Phosphoserine. Lys-2344 carries the post-translational modification N6-acetyllysine. Acidic residues-rich tracts occupy residues 2372–2383 (EPGEAEVQEEDH) and 2391–2402 (ADGDIMDGEAET). Phosphoserine occurs at positions 2439, 2442, and 2468. The segment covering 2465-2475 (SNLSQASTLQA) has biased composition (polar residues). The span at 2485-2549 (DPEDEEEHTQ…SEMELDEDYP (65 aa)) shows a compositional bias: acidic residues. Ser-2604, Ser-2609, and Ser-2612 each carry phosphoserine. Thr-2631 bears the Phosphothreonine mark. A phosphoserine mark is found at Ser-2661, Ser-2672, and Ser-2696. Over residues 2781-2793 (IIDKGKEDKENRD) the composition is skewed to basic and acidic residues. Disordered stretches follow at residues 2781–3047 (IIDK…GVDP) and 3113–3136 (QQRA…MDPV). A compositionally biased stretch (polar residues) spans 2794 to 2813 (QSAQCTVSKTNDSTEQNVSD). Residues 2815–2849 (TPMPDSYPTTPSSTDAPTSESKETLGTLQPSQQQP) show a composition bias toward low complexity. Position 2828 is a phosphothreonine (Thr-2828). 3 stretches are compositionally biased toward polar residues: residues 2895 to 2912 (AETT…TSLS), 2924 to 2941 (AVSS…SLAS), and 2954 to 2967 (AGSS…SSTP). Phosphoserine is present on residues Ser-2903, Ser-2910, Ser-2912, Ser-2938, Ser-2964, and Ser-2965. A Phosphothreonine modification is found at Thr-2966. Residues 2990–3009 (PPEDSSPPASSESSSTRDSA) are compositionally biased toward low complexity. The residue at position 2995 (Ser-2995) is a Phosphoserine. Residues Ser-3193, Ser-3194, Ser-3199, Ser-3204, and Ser-3212 each carry the phosphoserine modification. Arg-3226 is subject to Omega-N-methylarginine. Disordered regions lie at residues 3320–3343 (PKLS…SHEN), 3431–3458 (QRTK…SQSS), 3482–3501 (GKNS…ETSL), 3548–3590 (SEVQ…TTPV), and 3615–3642 (TPTT…EGGS). Residues 3432-3446 (RTKETNCESDRERGS) show a composition bias toward basic and acidic residues. The span at 3447–3458 (KQACSPCSSQSS) shows a compositional bias: low complexity. Low complexity-rich tracts occupy residues 3552-3579 (TNSS…ATAP) and 3615-3628 (TPTT…TSTT). Ser-3633, Ser-3740, Ser-3830, Ser-3835, Ser-3837, and Ser-3838 each carry phosphoserine. The disordered stretch occupies residues 3815–3836 (TRRANKKAKQTGRLGSSGLGSA). Positions 3826-3836 (GRLGSSGLGSA) are enriched in low complexity. Disordered stretches follow at residues 3859–3927 (EGQR…LPLL) and 3974–4028 (RESK…SSSL). Positions 3871–3880 (TSESSNQSET) are enriched in polar residues. A phosphoserine mark is found at Ser-3887, Ser-3895, and Ser-3907. The span at 3894–3905 (PSPSAQDTQSIV) shows a compositional bias: polar residues. Thr-3910 carries the phosphothreonine modification. Basic and acidic residues-rich tracts occupy residues 3913–3922 (GEKEKEERPP) and 3974–3995 (RESK…KDEP). A phosphoserine mark is found at Ser-3986 and Ser-3999. Over residues 3996 to 4005 (PPLSPAPLTP) the composition is skewed to pro residues. Phosphothreonine occurs at positions 4004 and 4007. The segment covering 4018–4028 (EPSSMHISSSL) has biased composition (polar residues). The HECT domain occupies 4118 to 4454 (SPEEMKNRLY…QECSEGFGLA (337 aa)). Phosphotyrosine is present on Tyr-4351. Cys-4421 functions as the Glycyl thioester intermediate in the catalytic mechanism.

It belongs to the UPL family. TOM1/PTR1 subfamily. Interacts with isoform p14ARF of CDKN2A which strongly inhibits HUWE1 ubiquitin ligase activity. Interacts with MYCN, POLB and CDC6. Interacts with isoform 2 of PA2G4. Interacts with NR1D1. Interacts with AMBRA1. Interacts with HAPSTR1. Interacts with HAPSTR2. In hepatocytes, interacts with PAQR3; the interaction promotes PPARA poylubiquitination and STUB1-mediated degradation. Phosphorylated on tyrosine, phosphorylation is probably required for its ability to inhibit TP53 transactivation. In terms of tissue distribution, widely expressed.

The protein resides in the cytoplasm. It localises to the nucleus. It is found in the mitochondrion. The enzyme catalyses S-ubiquitinyl-[E2 ubiquitin-conjugating enzyme]-L-cysteine + [acceptor protein]-L-lysine = [E2 ubiquitin-conjugating enzyme]-L-cysteine + N(6)-ubiquitinyl-[acceptor protein]-L-lysine.. Its pathway is protein modification; protein ubiquitination. In terms of biological role, E3 ubiquitin-protein ligase which mediates ubiquitination and subsequent proteasomal degradation of target proteins. Regulates apoptosis by catalyzing the polyubiquitination and degradation of MCL1. Mediates monoubiquitination of DNA polymerase beta (POLB) at 'Lys-41', 'Lys-61' and 'Lys-81', thereby playing a role in base-excision repair. Also ubiquitinates the p53/TP53 tumor suppressor and core histones including H1, H2A, H2B, H3 and H4. Ubiquitinates MFN2 to negatively regulate mitochondrial fusion in response to decreased stearoylation of TFRC. Ubiquitination of MFN2 also takes place following induction of mitophagy; AMBRA1 acts as a cofactor for HUWE1-mediated ubiquitination. Regulates neural differentiation and proliferation by catalyzing the polyubiquitination and degradation of MYCN. May regulate abundance of CDC6 after DNA damage by polyubiquitinating and targeting CDC6 to degradation. Mediates polyubiquitination of PA2G4. Acts in concert with MYCBP2 to regulate the circadian clock gene expression by promoting the lithium-induced ubiquination and degradation of NR1D1. Binds to an upstream initiator-like sequence in the preprodynorphin gene. Mediates HAPSTR1 degradation, but is also a required cofactor in the pathway by which HAPSTR1 governs stress signaling. Acts as a regulator of the JNK and NF-kappa-B signaling pathways by mediating assembly of heterotypic 'Lys-63'-/'Lys-48'-linked branched ubiquitin chains that are then recognized by TAB2: HUWE1 mediates branching of 'Lys-48'-linked chains of substrates initially modified with 'Lys-63'-linked conjugates by TRAF6. 'Lys-63'-/'Lys-48'-linked branched ubiquitin chains protect 'Lys-63'-linkages from CYLD deubiquitination. Ubiquitinates PPARA in hepatocytes. This Rattus norvegicus (Rat) protein is E3 ubiquitin-protein ligase HUWE1 (Huwe1).